The primary structure comprises 56 residues: Chymotrypsin inhibitor (56 aa).

Cystine bridges form between Cys-3–Cys-36, Cys-12–Cys-32, Cys-16–Cys-28, Cys-20–Cys-56, and Cys-38–Cys-50. One can recognise a TIL domain in the interval 3 to 56 (CGPNEVFNTCGSACAPTCAQPKTRICTMQCRIGCQCQEGFLRNGEGACVLPENC).

This sequence belongs to the serine protease inhibitor-like (TIL domain-containing) family.

It is found in the secreted. Chymotrypsin and cathepsin G inhibitor. The polypeptide is Chymotrypsin inhibitor (Apis mellifera (Honeybee)).